The primary structure comprises 611 residues: uncharacterized protein (611 aa).

The protein belongs to the metallo-dependent hydrolases superfamily. N-acyl-D-amino-acid deacylase family.

This is an uncharacterized protein from Mycobacterium bovis (strain ATCC BAA-935 / AF2122/97).